Here is a 1393-residue protein sequence, read N- to C-terminus: DNA-directed RNA polymerase subunit beta'' (1393 aa).

Zn(2+) contacts are provided by Cys220, Cys291, Cys298, and Cys301.

It belongs to the RNA polymerase beta' chain family. RpoC2 subfamily. As to quaternary structure, in plastids the minimal PEP RNA polymerase catalytic core is composed of four subunits: alpha, beta, beta', and beta''. When a (nuclear-encoded) sigma factor is associated with the core the holoenzyme is formed, which can initiate transcription. The cofactor is Zn(2+).

The protein localises to the plastid. It localises to the chloroplast. It carries out the reaction RNA(n) + a ribonucleoside 5'-triphosphate = RNA(n+1) + diphosphate. Functionally, DNA-dependent RNA polymerase catalyzes the transcription of DNA into RNA using the four ribonucleoside triphosphates as substrates. In Gossypium hirsutum (Upland cotton), this protein is DNA-directed RNA polymerase subunit beta''.